The chain runs to 393 residues: Iripin-3 (393 aa).

Positions 1–16 (MKVITAFLSVFVLCSA) are cleaved as a signal peptide. N-linked (GlcNAc...) asparagine glycans are attached at residues asparagine 104 and asparagine 265.

Belongs to the serpin family. As to quaternary structure, interacts with human KLKB1. Interacts with human ST14. Interacts with human F2 (thrombin). As to expression, saliva (at protein level). Expressed in salivary gland. Expressed in ovary during blood feeding.

Its subcellular location is the secreted. Its function is as follows. Serine protease inhibitor that modulates blood feeding of ticks on vertebrate species. Moderately inhibits host plasma kallikrein (KLKB1), matriptase (ST14), trypsin, plasmin (PLG), thrombin (F2) and coagulation factor VIIa (F7). Slightly inhibits host alpha-chymotrypsin, tPA/tissue-type plasminogen activator (PLAT), uPA/urokinase-type plasminogen activator (PLAU) and coagulation factor XIIa (F12). Slightly inhibits the extrinsic pathway while not affecting the intrinsic and common pathways of host blood coagulation. Decreases synthesis and secretion of IL6 by mouse bone marrow-derived macrophages. Decreases viability of mouse B- and T-cells. Decreases proliferation of mouse CD4+ T-cells in response to stimulation. Inhibits Th1 immune responses in mouse cells. Promotes differentiation of mouse regulatory T-cells. This is Iripin-3 from Ixodes ricinus (Common tick).